Here is a 129-residue protein sequence, read N- to C-terminus: Cocaine- and amphetamine-regulated transcript protein (129 aa).

Residues 1 to 27 form the signal peptide; that stretch reads MESSRLRLLPLLGAALLLLLPLLGARA. Y41 is modified (phosphotyrosine). The residue at position 48 (S48) is a Phosphoserine. 3 cysteine pairs are disulfide-bonded: C95–C113, C101–C121, and C115–C128.

It belongs to the CART family.

Its subcellular location is the secreted. Functionally, satiety factor closely associated with the actions of leptin and neuropeptide y; this anorectic peptide inhibits both normal and starvation-induced feeding and completely blocks the feeding response induced by neuropeptide Y and regulated by leptin in the hypothalamus. This chain is Cocaine- and amphetamine-regulated transcript protein (Cartpt), found in Mus musculus (Mouse).